The chain runs to 331 residues: Flavonol synthase 1 (331 aa).

Residues 191 to 292 form the Fe2OG dioxygenase domain; the sequence is DAIELLLKIN…RMSWPVFCSP (102 aa). Fe cation-binding residues include His217, Asp219, and His273. Residue Arg283 coordinates 2-oxoglutarate.

Belongs to the iron/ascorbate-dependent oxidoreductase family. It depends on L-ascorbate as a cofactor. Requires Fe(2+) as cofactor. As to expression, expressed in young cromes.

The enzyme catalyses a (2R,3R)-dihydroflavonol + 2-oxoglutarate + O2 = a flavonol + succinate + CO2 + H2O. It catalyses the reaction (2R,3R)-dihydrokaempferol + 2-oxoglutarate + O2 = kaempferol + succinate + CO2 + H2O + H(+). It carries out the reaction (2R,3R)-dihydroquercetin + 2-oxoglutarate + O2 = quercetin + succinate + CO2 + H2O + H(+). The catalysed reaction is (2R,3R)-dihydromyricetin + 2-oxoglutarate + O2 = myricetin + succinate + CO2 + H2O + H(+). It participates in flavonoid metabolism. Functionally, catalyzes the formation of flavonols from dihydroflavonols. Can act on dihydrokaempferol to produce kaempferol, on dihydroquercetin to produce quercitin and on dihydromyricetin to produce myricetin. This chain is Flavonol synthase 1, found in Crocosmia x crocosmiiflora (Montbretia).